Reading from the N-terminus, the 548-residue chain is Chaperonin GroEL 1 (548 aa).

Residues 30–33 (TLGP), Lys-51, 87–91 (DGTTT), Gly-415, 479–481 (NAA), and Asp-495 contribute to the ATP site.

It belongs to the chaperonin (HSP60) family. In terms of assembly, forms a cylinder of 14 subunits composed of two heptameric rings stacked back-to-back. Interacts with the co-chaperonin GroES.

It is found in the cytoplasm. It carries out the reaction ATP + H2O + a folded polypeptide = ADP + phosphate + an unfolded polypeptide.. Functionally, together with its co-chaperonin GroES, plays an essential role in assisting protein folding. The GroEL-GroES system forms a nano-cage that allows encapsulation of the non-native substrate proteins and provides a physical environment optimized to promote and accelerate protein folding. The polypeptide is Chaperonin GroEL 1 (Anaeromyxobacter dehalogenans (strain 2CP-C)).